The chain runs to 724 residues: Probable protein phosphatase 2C 62 (724 aa).

The segment at 357-385 (DELISTSEATRHSVDEIAQKPIIDTSEKN) is disordered. The span at 365-374 (ATRHSVDEIA) shows a compositional bias: basic and acidic residues. In terms of domain architecture, PPM-type phosphatase spans 482–719 (DSGFASLQSP…DAVTVIISFV (238 aa)). The Mn(2+) site is built by Asp514, Gly515, Asp643, and Asp710.

The protein belongs to the PP2C family. The cofactor is Mg(2+). It depends on Mn(2+) as a cofactor.

It catalyses the reaction O-phospho-L-seryl-[protein] + H2O = L-seryl-[protein] + phosphate. It carries out the reaction O-phospho-L-threonyl-[protein] + H2O = L-threonyl-[protein] + phosphate. The chain is Probable protein phosphatase 2C 62 from Arabidopsis thaliana (Mouse-ear cress).